Reading from the N-terminus, the 389-residue chain is 8-amino-7-oxononanoate synthase 2 (389 aa).

Position 21 (Arg-21) interacts with substrate. 108 to 109 (GY) lines the pyridoxal 5'-phosphate pocket. Residue His-133 participates in substrate binding. Pyridoxal 5'-phosphate is bound by residues Ser-180, 205–208 (DDAH), and 234–237 (TLSK). Lys-237 is modified (N6-(pyridoxal phosphate)lysine). Thr-351 provides a ligand contact to substrate.

The protein belongs to the class-II pyridoxal-phosphate-dependent aminotransferase family. BioF subfamily. Homodimer. The cofactor is pyridoxal 5'-phosphate.

It catalyses the reaction 6-carboxyhexanoyl-[ACP] + L-alanine + H(+) = (8S)-8-amino-7-oxononanoate + holo-[ACP] + CO2. It participates in cofactor biosynthesis; biotin biosynthesis. In terms of biological role, catalyzes the decarboxylative condensation of pimeloyl-[acyl-carrier protein] and L-alanine to produce 8-amino-7-oxononanoate (AON), [acyl-carrier protein], and carbon dioxide. The polypeptide is 8-amino-7-oxononanoate synthase 2 (bioF) (Bacillus subtilis (strain 168)).